An 868-amino-acid chain; its full sequence is Leucine--tRNA ligase (868 aa).

Positions 42 to 52 match the 'HIGH' region motif; that stretch reads PYPSGKLHMGH. Residues 627–631 carry the 'KMSKS' region motif; it reads KMSKS. Lysine 630 serves as a coordination point for ATP.

This sequence belongs to the class-I aminoacyl-tRNA synthetase family.

Its subcellular location is the cytoplasm. It catalyses the reaction tRNA(Leu) + L-leucine + ATP = L-leucyl-tRNA(Leu) + AMP + diphosphate. The protein is Leucine--tRNA ligase of Pseudomonas putida (strain W619).